The primary structure comprises 139 residues: MSVNYMRLLCLMACCFSVCLAYRPSGNSYRSGGYGEYIKPVETAEAQAAALTNAAGAAASSAKLDGADWYALNRYGWEQGKPLLVKPYGPLDNLYAAALPPRAFVAEIDPVFKRNSYGGAYGERTVTLNTGSKLAVSAA.

Positions 1–21 are cleaved as a signal peptide; the sequence is MSVNYMRLLCLMACCFSVCLA.

The protein belongs to the chorion protein S16 family.

The protein resides in the secreted. Its function is as follows. Chorion membrane (egg shell) protein; plays a role in protecting the egg from the environment. In Drosophila virilis (Fruit fly), this protein is Chorion protein S16 (Cp16).